Reading from the N-terminus, the 230-residue chain is Small ribosomal subunit protein uS3c (230 aa).

The 71-residue stretch at 39-109 folds into the KH type-2 domain; sequence IRSFIHGKLS…QIRVNVVEIS (71 aa).

It belongs to the universal ribosomal protein uS3 family. In terms of assembly, part of the 30S ribosomal subunit.

It localises to the plastid. The protein resides in the chloroplast. In Porphyra purpurea (Red seaweed), this protein is Small ribosomal subunit protein uS3c (rps3).